The primary structure comprises 402 residues: Endo-polygalacturonase (402 aa).

The first 23 residues, 1–23 (MEYQSGKRVLSLSLGLIGLFSAS), serve as a signal peptide directing secretion. 2 cysteine pairs are disulfide-bonded: Cys41–Cys62 and Cys115–Cys125. The active-site Proton donor is Asp249. His277 is an active-site residue.

This sequence belongs to the glycosyl hydrolase 28 family. As to quaternary structure, monomer.

Its subcellular location is the secreted. It carries out the reaction (1,4-alpha-D-galacturonosyl)n+m + H2O = (1,4-alpha-D-galacturonosyl)n + (1,4-alpha-D-galacturonosyl)m.. Functionally, involved in maceration and soft-rotting of plant tissue. This is Endo-polygalacturonase (pehA) from Pectobacterium parmentieri.